The chain runs to 255 residues: ATP synthase subunit a (255 aa).

Residues 1 to 7 (MMFNNII) constitute a propeptide, removed in mature form. 6 helical membrane passes run 35-55 (FGFYIIISTIIILTLHLLITY), 91-111 (YFPFIYGLFIFILMNNLLGLI), 120-140 (HFILTFFISFTVVLGATILGF), 147-167 (FFSLFVPSGCPLGLLPLLVLI), 177-197 (VSLGLRLSANILSGHMLLVIL), and 208-228 (GIFYFLIGLIPLAFIFAFSGL).

The protein belongs to the ATPase A chain family. In terms of assembly, F-type ATPases have 2 components, CF(1) - the catalytic core - and CF(0) - the membrane proton channel. CF(1) has five subunits: alpha(3), beta(3), gamma(1), delta(1), epsilon(1). CF(0) has three main subunits: a, b and c.

It is found in the mitochondrion inner membrane. In terms of biological role, mitochondrial membrane ATP synthase (F(1)F(0) ATP synthase or Complex V) produces ATP from ADP in the presence of a proton gradient across the membrane which is generated by electron transport complexes of the respiratory chain. F-type ATPases consist of two structural domains, F(1) - containing the extramembraneous catalytic core and F(0) - containing the membrane proton channel, linked together by a central stalk and a peripheral stalk. During catalysis, ATP synthesis in the catalytic domain of F(1) is coupled via a rotary mechanism of the central stalk subunits to proton translocation. Key component of the proton channel; it may play a direct role in the translocation of protons across the membrane. In Trichophyton rubrum (Athlete's foot fungus), this protein is ATP synthase subunit a (ATP6).